Reading from the N-terminus, the 291-residue chain is MIVLKWLFLTISPCDAAEPWQLGSQDAATPIMQGIIDLHHDIFFFLILILVFVLWILVRALWHFHYKKNAIPQRIVHGTTIEILRTIFPCFISIFIVEPSFALALDDAAEALFPNTAPTPSNTSSSEDSFGLRVLSEPWPITRNLGLESSICNRIRLLEAANSPFLLGKEKGQYWGEIQECLYNVSEQREYYRLLDFENRDLQIRERKHSCLEVFRGVLLRNPYLEERAAYSPQEAFFDFLNERRDALDISNPGSSPAEMDRLEILFLGEIERDLLRRGDESLYIKQLLGD.

A run of 2 helical transmembrane segments spans residues Ile42–Trp62 and Thr86–Asp106.

Belongs to the cytochrome c oxidase subunit 2 family.

It localises to the mitochondrion membrane. This is an uncharacterized protein from Arabidopsis thaliana (Mouse-ear cress).